A 175-amino-acid chain; its full sequence is Peptide deformylase (175 aa).

The Fe cation site is built by cysteine 99 and histidine 141. Glutamate 142 is an active-site residue. Histidine 145 contacts Fe cation.

It belongs to the polypeptide deformylase family. It depends on Fe(2+) as a cofactor.

It catalyses the reaction N-terminal N-formyl-L-methionyl-[peptide] + H2O = N-terminal L-methionyl-[peptide] + formate. In terms of biological role, removes the formyl group from the N-terminal Met of newly synthesized proteins. Requires at least a dipeptide for an efficient rate of reaction. N-terminal L-methionine is a prerequisite for activity but the enzyme has broad specificity at other positions. This chain is Peptide deformylase, found in Rickettsia typhi (strain ATCC VR-144 / Wilmington).